The sequence spans 305 residues: Ribose import binding protein RbsB (305 aa).

The N-terminal stretch at 1–18 is a signal peptide; sequence MKKAVSVILTLSLFLLTA. C19 carries N-palmitoyl cysteine lipidation. The S-diacylglycerol cysteine moiety is linked to residue C19.

This sequence belongs to the bacterial solute-binding protein 2 family. The complex is composed of an ATP-binding protein (RbsA), two transmembrane proteins (RbsC) and a solute-binding protein (RbsB). Interacts with FloT.

The protein localises to the cell membrane. It localises to the membrane raft. Its function is as follows. Part of the ABC transporter complex RbsABC involved in ribose import. Binds ribose. The polypeptide is Ribose import binding protein RbsB (rbsB) (Bacillus subtilis (strain 168)).